The chain runs to 301 residues: Putative S-adenosyl-L-methionine-dependent methyltransferase BCG_0775c (301 aa).

S-adenosyl-L-methionine-binding positions include Asp-130 and 159 to 160 (DL).

It belongs to the UPF0677 family.

Its function is as follows. Exhibits S-adenosyl-L-methionine-dependent methyltransferase activity. The protein is Putative S-adenosyl-L-methionine-dependent methyltransferase BCG_0775c of Mycobacterium bovis (strain BCG / Pasteur 1173P2).